Consider the following 126-residue polypeptide: Large ribosomal subunit protein bL12 (126 aa).

It belongs to the bacterial ribosomal protein bL12 family. In terms of assembly, homodimer. Part of the ribosomal stalk of the 50S ribosomal subunit. Forms a multimeric L10(L12)X complex, where L10 forms an elongated spine to which 2 to 4 L12 dimers bind in a sequential fashion. Binds GTP-bound translation factors.

In terms of biological role, forms part of the ribosomal stalk which helps the ribosome interact with GTP-bound translation factors. Is thus essential for accurate translation. In Bordetella petrii (strain ATCC BAA-461 / DSM 12804 / CCUG 43448), this protein is Large ribosomal subunit protein bL12.